A 76-amino-acid chain; its full sequence is Gas vesicle protein A1 (76 aa).

2 binds to GvpF1 regions span residues 1-22 and 2-43; these read MAQP…KGVV and AQPD…EARV. The interval 9 to 19 is alpha helix 1; it reads LAEVLDRVLDK. The interval 23-31 is beta-strand 1; the sequence is VDVWARVSL. The segment at 32-34 is beta turn; sequence VGI. Residues 35-43 are beta-strand 2; it reads EILTVEARV. Residues 48 to 67 are alpha helix 2; that stretch reads VDTFLHYAEEIAKIEQAELT.

Belongs to the gas vesicle GvpA family. As to quaternary structure, major component of the gas vesicle shell which is 2 nm thick and consists of a single layer of the protein. It forms 4.6 nm-wide ribs nearly perpendicular to the long axis of the vesicle. Modeled as antiparallel homodimers. The ribs form a low-pitch helix rather than a stack of hoops. Interacts with GvpF1 via its N-terminus (residues 1-43) in early growth stages, none of the other GvpG1 to GvpM1 proteins were seen to directly bind GvpA1 in H.volcanii experiments. Might interact with GvpJ1. Might interact with GvpG1, GvpH1, GvpJ1, GvpM1, GvpN1 and GvpO1.

The protein resides in the gas vesicle shell. Functionally, gas vesicles are hollow, gas filled proteinaceous nanostructures found in several microbial planktonic microorganisms. They allow positioning of halobacteria at the optimal depth for growth in the poorly aerated shallow brine pools of their habitat. GvpA forms the protein shell. The critical collapse pressure (CCP) of p-vac gas vesicles is 0.66 MPa; mutating residues in p-gvpA to those found in c-gvpA increases the CCP. These residues partially and independently control the width and strength of gas vesicles. In stationary phase gas vesicles, about 30 times more GvpA1 is found than GvpA2. Its function is as follows. Expression of a 9.5 kb p-vac DNA fragment containing 2 divergently transcribed regions (gvpD-gvpE-gvpF-gvpG-gvpH-gvpI-gvpJ-gvpK-gvpL-gvpM and gvpA-gvpC-gvpN-gvpO) allows H.volcanii to produce gas vesicles. All site-directed mutagenesis is tested in H.volcanii. A minimal gas vesicle can be made in H.volcanii by gvpA1-gvpO1 plus gvpF1-gvpG1-gvpJ1-gvpK1-gvpL1-gvpM1; lack of enough GvpJ1 prevents their formation. A similar region restores gas vesicle production in H.halobium without the p-vac locus, but it still has the c-vac locus. The protein is Gas vesicle protein A1 of Halobacterium salinarum (strain ATCC 700922 / JCM 11081 / NRC-1) (Halobacterium halobium).